We begin with the raw amino-acid sequence, 606 residues long: Neutral/alkaline invertase 3, chloroplastic (606 aa).

Residues 1-58 (MGIAEVALHSMPGAFAAHSPASNLPLAADAARGRRRRSANSLHSSRALQGPVRFPGLR) constitute a chloroplast transit peptide. Residues 97 to 126 (RVPGQAVGGNGSVNGSAAKPPPQRRKASSV) are disordered.

The protein belongs to the glycosyl hydrolase 100 family.

The protein resides in the plastid. It is found in the chloroplast. It carries out the reaction Hydrolysis of terminal non-reducing beta-D-fructofuranoside residues in beta-D-fructofuranosides.. Functionally, mitochondrial invertase that cleaves sucrose into glucose and fructose. This Oryza sativa subsp. japonica (Rice) protein is Neutral/alkaline invertase 3, chloroplastic.